A 758-amino-acid polypeptide reads, in one-letter code: Meiotic driver SPOK4 (758 aa).

Residues 4 to 41 (KDRITQLLRKLEEAKAREEEAKAREAQERCEKERLQLE) are a coiled coil. Disordered regions lie at residues 180–230 (ELTQ…GVGI) and 414–499 (LSSA…MADP). Basic and acidic residues predominate over residues 181–190 (LTQEDDRSSG). Over residues 416-429 (SAASSQNTENSEYT) the composition is skewed to polar residues. Residues 457 to 468 (NEHDEHDEDHSE) are compositionally biased toward basic and acidic residues.

Its subcellular location is the cytoplasm. The protein resides in the nucleus. Its function is as follows. Promotes unequal transmission of alleles from the parental zygote to progeny spores by acting as poison/antidote system, leading to poisoning of progeny that do not inherit the allele. May possess DNA nuclease activity that leads to spore killing, and a kinase activity that confers resistance to the nuclease activity. Can suppress meiotic drive by the P.comata SPOK1 protein. This Podospora anserina (Pleurage anserina) protein is Meiotic driver SPOK4.